The primary structure comprises 348 residues: Protein pelota homolog (348 aa).

Belongs to the eukaryotic release factor 1 family. Pelota subfamily. As to quaternary structure, monomer. Requires a divalent metal cation as cofactor.

The protein resides in the cytoplasm. In terms of biological role, may function in recognizing stalled ribosomes, interact with stem-loop structures in stalled mRNA molecules, and effect endonucleolytic cleavage of the mRNA. May play a role in the release non-functional ribosomes and degradation of damaged mRNAs. Has endoribonuclease activity. The chain is Protein pelota homolog from Methanococcus maripaludis (strain DSM 14266 / JCM 13030 / NBRC 101832 / S2 / LL).